A 122-amino-acid chain; its full sequence is Large ribosomal subunit protein bL19 (122 aa).

This sequence belongs to the bacterial ribosomal protein bL19 family.

In terms of biological role, this protein is located at the 30S-50S ribosomal subunit interface and may play a role in the structure and function of the aminoacyl-tRNA binding site. The sequence is that of Large ribosomal subunit protein bL19 from Mycoplasmoides gallisepticum (strain R(low / passage 15 / clone 2)) (Mycoplasma gallisepticum).